The sequence spans 394 residues: Galactose-3-O-sulfotransferase 2 (394 aa).

Residues 1–8 (MWGSQHRS) lie on the Cytoplasmic side of the membrane. A helical; Signal-anchor for type II membrane protein transmembrane segment spans residues 9–29 (FQVALWFLVLAVFLLVGFLHV). Residues 30 to 394 (DFRLLIPDKV…TPKDIPFLKK (365 aa)) lie on the Lumenal side of the membrane. Residues Asn72, Asn176, Asn284, and Asn326 are each glycosylated (N-linked (GlcNAc...) asparagine).

It belongs to the galactose-3-O-sulfotransferase family.

It is found in the golgi apparatus. The protein localises to the golgi stack membrane. It participates in protein modification; carbohydrate sulfation. Strongly inhibited by Cu(2+) and Zn(2+). In terms of biological role, transfers a sulfate group to the hydroxyl group at C3 of non-reducing beta-galactosyl residues. Acts both on type 1 (Gal-beta-1,3-GlcNAc) and type 2 (Gal-beta-1,4-GlcNAc) chains with similar efficiency. The protein is Galactose-3-O-sulfotransferase 2 (Gal3st2) of Mus musculus (Mouse).